The following is a 365-amino-acid chain: MAAATPLLKDELDIVIPTIRNLDFLEMWRPFFQPYHLIIVQDGDPSKIIKVPEGFDYELYNRNDINRILGPKASCISFKDSACRCFGYMVSKKKYIYTIDDDCFVAKDPSGKDINALEQHIKNLLCPSTPHFFNTLYDPYRDGADFVRGYPFSMREGAPTAVSHGLWLNIPDYDAPTQLVKPHERNTRYVDAVMTIPKGTLFPMCGMNLAFDRDLIGPAMYFGLMGDGQPIGRYDDMWAGWCTKVICDHLGLGIKTGLPYIWHSKASNPFVNLKKEYNGIFWQEEIIPFFQAATLPKECTTVQQCYLELSKQVKKKLSSIDPYFTKLGEAMVTWIEAWDELNLLGTTWLSCLSPMVQQRLKSRCY.

A DXD motif motif is present at residues 100–102; it reads DDD. R148 is a glycosylation site (N-linked (Glc...) arginine).

Belongs to the RGP family. Homopentamer or homohexamer. It depends on Mn(2+) as a cofactor. The cofactor is Mg(2+). Reversibly glycosylated by UDP-glucose, UDP-xylose and UDP-galactose, but not UDP-mannose. As to expression, expressed in all tissues tested, including root, tuber, leaf, petiole, shoot, stolon and stem.

It localises to the secreted. Its subcellular location is the cell wall. The protein localises to the cell junction. It is found in the plasmodesma. The protein resides in the golgi apparatus. The catalysed reaction is UDP-beta-L-arabinofuranose = UDP-beta-L-arabinopyranose. Functionally, probable UDP-L-arabinose mutase involved in the biosynthesis of cell wall non-cellulosic polysaccharides. Was initially shown to possess an autoglycosylating activity which is dependent on the presence of UDP-glucose and manganese. In Solanum tuberosum (Potato), this protein is Probable UDP-arabinopyranose mutase 1.